The sequence spans 329 residues: MGNRKKEIALQVNINTQELWEEMLGSKGLTVVDVYQGWCGPCKPMVSLFQKMRIEVGLDRLHFASAEADRLDVLEKYQGKCEPTFLFYTRGELVAVVKGANPTLLQKTILQQLEAEKKVPAEGGEWRAATDEELLGALKWPPHRKDGGEDGDIASSGKTCTLGIIKPDAVAHGKAEEIIMKIQEAGFDILLKEERTLTEAEMQAFYQHRAREEAFERLVHHMCSGPSHLLILTKTEGTEDVVTAWRTFLGPCDPNVARREHPESLRAQYGTEMPFNAVHGSRDREDANRELALLFPSFKFSDKDKEAPPGAEAQTMVGPVEDPCMSERI.

In terms of domain architecture, Thioredoxin spans 11–115 (QVNINTQELW…QKTILQQLEA (105 aa)). The tract at residues 157 to 303 (GKTCTLGIIK…LFPSFKFSDK (147 aa)) is NDK. The tract at residues 303 to 329 (KDKEAPPGAEAQTMVGPVEDPCMSERI) is disordered.

The protein belongs to the NDK family. Monomer and homodimer. In terms of tissue distribution, expressed in lung airway epithelium (at protein level).

The protein localises to the cytoplasm. It is found in the cytoskeleton. Its subcellular location is the cilium axoneme. The protein resides in the dynein axonemal particle. In terms of biological role, may be a regulator of microtubule physiology. The chain is Thioredoxin domain-containing protein 6 from Mus musculus (Mouse).